Reading from the N-terminus, the 513-residue chain is ATP synthase subunit alpha (513 aa).

172-179 (GDRQTGKT) serves as a coordination point for ATP.

The protein belongs to the ATPase alpha/beta chains family. F-type ATPases have 2 components, CF(1) - the catalytic core - and CF(0) - the membrane proton channel. CF(1) has five subunits: alpha(3), beta(3), gamma(1), delta(1), epsilon(1). CF(0) has three main subunits: a(1), b(2) and c(9-12). The alpha and beta chains form an alternating ring which encloses part of the gamma chain. CF(1) is attached to CF(0) by a central stalk formed by the gamma and epsilon chains, while a peripheral stalk is formed by the delta and b chains.

The protein resides in the cell inner membrane. It catalyses the reaction ATP + H2O + 4 H(+)(in) = ADP + phosphate + 5 H(+)(out). Its function is as follows. Produces ATP from ADP in the presence of a proton gradient across the membrane. The alpha chain is a regulatory subunit. In Gluconacetobacter diazotrophicus (strain ATCC 49037 / DSM 5601 / CCUG 37298 / CIP 103539 / LMG 7603 / PAl5), this protein is ATP synthase subunit alpha.